We begin with the raw amino-acid sequence, 394 residues long: Dual-specificity RNA methyltransferase RlmN (394 aa).

The active-site Proton acceptor is E92. The 244-residue stretch at 98–341 folds into the Radical SAM core domain; that stretch reads ENDRGTLCIS…TTVRRTRGDD (244 aa). C105 and C346 form a disulfide bridge. [4Fe-4S] cluster-binding residues include C112, C116, and C119. Residues 166–167, S198, 220–222, and N303 contribute to the S-adenosyl-L-methionine site; these read GE and SLH. The S-methylcysteine intermediate role is filled by C346. Residues 374–394 are disordered; that stretch reads DSAVQRRADAAPSGSATETTR.

Belongs to the radical SAM superfamily. RlmN family. [4Fe-4S] cluster is required as a cofactor.

It localises to the cytoplasm. The enzyme catalyses adenosine(2503) in 23S rRNA + 2 reduced [2Fe-2S]-[ferredoxin] + 2 S-adenosyl-L-methionine = 2-methyladenosine(2503) in 23S rRNA + 5'-deoxyadenosine + L-methionine + 2 oxidized [2Fe-2S]-[ferredoxin] + S-adenosyl-L-homocysteine. It carries out the reaction adenosine(37) in tRNA + 2 reduced [2Fe-2S]-[ferredoxin] + 2 S-adenosyl-L-methionine = 2-methyladenosine(37) in tRNA + 5'-deoxyadenosine + L-methionine + 2 oxidized [2Fe-2S]-[ferredoxin] + S-adenosyl-L-homocysteine. In terms of biological role, specifically methylates position 2 of adenine 2503 in 23S rRNA and position 2 of adenine 37 in tRNAs. m2A2503 modification seems to play a crucial role in the proofreading step occurring at the peptidyl transferase center and thus would serve to optimize ribosomal fidelity. The protein is Dual-specificity RNA methyltransferase RlmN of Methylibium petroleiphilum (strain ATCC BAA-1232 / LMG 22953 / PM1).